A 193-amino-acid polypeptide reads, in one-letter code: Pilin-like protein PilA2 (193 aa).

Residues 1 to 4 constitute a propeptide, leader sequence; that stretch reads MRKG. An N-methylleucine modification is found at leucine 5. The chain crosses the membrane as a helical span at residues 5-25; it reads LTLVEVLVTLVIMGIAFAALL.

The protein resides in the cell inner membrane. It is found in the cell outer membrane. It localises to the periplasm. Its function is as follows. Plays an essential role in natural DNA transformation but is not required for pilus biogenesis. This Thermus thermophilus (strain ATCC BAA-163 / DSM 7039 / HB27) protein is Pilin-like protein PilA2 (pilA2).